Here is a 908-residue protein sequence, read N- to C-terminus: Transferrin-binding protein A (908 aa).

An N-terminal signal peptide occupies residues 1 to 24 (MQQQHLFRLNILCLSLMTALPVYA). Positions 38-45 (DTIQVKAK) match the TonB box motif. Positions 51-176 (RDNEVTGLGK…LAGSVAFQTK (126 aa)) constitute a TBDR plug domain. A TBDR beta-barrel domain is found at 187-908 (QWGIQSKTAY…NYTFSLEMKF (722 aa)). The TonB C-terminal box signature appears at 891 to 908 (NRYAAPGRNYTFSLEMKF).

It belongs to the TonB-dependent receptor family. As to quaternary structure, binds both human apo- and holo-transferrin (TF), via the TF C-terminus. Forms a large complex with TF and TbpB.

It localises to the cell outer membrane. Its function is as follows. Neisseria acquires iron by extracting it from serum transferrin (TF) in its human host. Acts as a TF receptor and is required for TF utilization. Binds both apo- and holo-TF, via the TF C-terminus. The protein is Transferrin-binding protein A of Neisseria meningitidis serogroup B.